A 360-amino-acid polypeptide reads, in one-letter code: Glutamate 5-kinase (360 aa).

K7 provides a ligand contact to ATP. Positions 47, 134, and 146 each coordinate substrate. ATP contacts are provided by residues 166–167 (TD) and 210–216 (TGGITTK). The PUA domain occupies 275–348 (VGQITLDEGA…LNKKENINSS (74 aa)).

The protein belongs to the glutamate 5-kinase family.

It is found in the cytoplasm. It catalyses the reaction L-glutamate + ATP = L-glutamyl 5-phosphate + ADP. It functions in the pathway amino-acid biosynthesis; L-proline biosynthesis; L-glutamate 5-semialdehyde from L-glutamate: step 1/2. Catalyzes the transfer of a phosphate group to glutamate to form L-glutamate 5-phosphate. The chain is Glutamate 5-kinase from Prochlorococcus marinus subsp. pastoris (strain CCMP1986 / NIES-2087 / MED4).